Here is a 264-residue protein sequence, read N- to C-terminus: Small ribosomal subunit protein eS1 (264 aa).

Position 34 is an N6-acetyllysine; alternate (Lys-34). Lys-34 participates in a covalent cross-link: Glycyl lysine isopeptide (Lys-Gly) (interchain with G-Cter in SUMO2); alternate. Lys-56 bears the N6-acetyllysine mark. Tyr-155 bears the ADP-ribosyltyrosine mark. Residues 232–264 (HGEGSSSGKATGDETGAKVERADGYEPPVQESV) form a disordered region. Phosphoserine is present on residues Ser-236 and Ser-237. Over residues 242–255 (TGDETGAKVERADG) the composition is skewed to basic and acidic residues. Lys-249 is subject to N6-acetyllysine; alternate. Lys-249 participates in a covalent cross-link: Glycyl lysine isopeptide (Lys-Gly) (interchain with G-Cter in SUMO2); alternate. The residue at position 256 (Tyr-256) is a Phosphotyrosine. Residue Ser-263 is modified to Phosphoserine.

It belongs to the eukaryotic ribosomal protein eS1 family. As to quaternary structure, component of the small ribosomal subunit. Mature ribosomes consist of a small (40S) and a large (60S) subunit. The 40S subunit contains about 33 different proteins and 1 molecule of RNA (18S). The 60S subunit contains about 49 different proteins and 3 molecules of RNA (28S, 5.8S and 5S). Identified in a IGF2BP1-dependent mRNP granule complex containing untranslated mRNAs. Binds with high affinity to IPO4. Interacts with DDIT3. Part of the small subunit (SSU) processome, composed of more than 70 proteins and the RNA chaperone small nucleolar RNA (snoRNA) U3. In terms of processing, ADP-ribosylated at Tyr-155 by PARP1 in presence of HPF1.

It localises to the cytoplasm. The protein resides in the nucleus. It is found in the nucleolus. In terms of biological role, component of the small ribosomal subunit. The ribosome is a large ribonucleoprotein complex responsible for the synthesis of proteins in the cell. Part of the small subunit (SSU) processome, first precursor of the small eukaryotic ribosomal subunit. During the assembly of the SSU processome in the nucleolus, many ribosome biogenesis factors, an RNA chaperone and ribosomal proteins associate with the nascent pre-rRNA and work in concert to generate RNA folding, modifications, rearrangements and cleavage as well as targeted degradation of pre-ribosomal RNA by the RNA exosome. May play a role during erythropoiesis through regulation of transcription factor DDIT3. This is Small ribosomal subunit protein eS1 from Bos taurus (Bovine).